The following is a 212-amino-acid chain: 3-isopropylmalate dehydratase small subunit 1 (212 aa).

The protein belongs to the LeuD family. LeuD type 1 subfamily. Heterodimer of LeuC and LeuD.

The catalysed reaction is (2R,3S)-3-isopropylmalate = (2S)-2-isopropylmalate. The protein operates within amino-acid biosynthesis; L-leucine biosynthesis; L-leucine from 3-methyl-2-oxobutanoate: step 2/4. In terms of biological role, catalyzes the isomerization between 2-isopropylmalate and 3-isopropylmalate, via the formation of 2-isopropylmaleate. This Chromobacterium violaceum (strain ATCC 12472 / DSM 30191 / JCM 1249 / CCUG 213 / NBRC 12614 / NCIMB 9131 / NCTC 9757 / MK) protein is 3-isopropylmalate dehydratase small subunit 1.